We begin with the raw amino-acid sequence, 189 residues long: Putative biopolymer transport protein ExbB-like 1 (189 aa).

Transmembrane regions (helical) follow at residues 14 to 34, 99 to 119, and 147 to 167; these read FVTT…LWVF, LVVL…GTVV, and LIAT…YLIL.

It belongs to the ExbB/TolQ family.

It is found in the cell inner membrane. This Helicobacter pylori (strain J99 / ATCC 700824) (Campylobacter pylori J99) protein is Putative biopolymer transport protein ExbB-like 1.